A 2167-amino-acid chain; its full sequence is RNA editing associated helicase 2 (2167 aa).

Residues 1-30 (MRAIRLTVACRYLGPFRSVTLSPVVLPVRL) constitute a mitochondrion transit peptide. Disordered stretches follow at residues 503-593 (RARG…DEAT) and 937-969 (ENAT…PTNV). Residues 532–541 (SSTQTPSSST) are compositionally biased toward low complexity. The 72-residue stretch at 1024 to 1095 (DAKTVLQRYC…AMHALALLRR (72 aa)) folds into the DRBM domain. The 166-residue stretch at 1348–1513 (LRAISSNQIV…FGNAPIINVE (166 aa)) folds into the Helicase ATP-binding domain. 1361–1368 (GTTGCGKT) lines the ATP pocket. The Important for binding to gRNA motif lies at 1366–1367 (GK). The short motif at 1460-1463 (DEIH) is the DEAH box element. Residues 1585–1762 (AIDHAVRSLD…SLCLQILALD (178 aa)) form the Helicase C-terminal domain. Residues 2132-2167 (IIEPCTEPKGGSSEAEKTHVNSSHTPTTSAEAGGDS) form a disordered region. The span at 2151–2161 (VNSSHTPTTSA) shows a compositional bias: polar residues.

This sequence belongs to the DEAD box helicase family. DEAH subfamily. Component of the REH2-associated complex (REH2C) composed of helicase REH2, associated factors H2F1 and H2F2, and mRNAs at various editing stages; the formation of the complex is RNA-independent. Within the complex, interacts with H2F1; the interaction is direct. Interacts transiently, in a RNA-dependent manner, with various editing complexes including the RNA editing core (RECC) complex, the gRNA-binding (GRBC) complex (also known as the MRB1 complex) and the RNA editing mediator (REMC) complex. Interacts with GAP1/GRBC2 via RNA forming a variant of the GRBC complex known as REH2-GRBC complex. Interacts with mitochondrial ribosomes.

Its subcellular location is the mitochondrion. It catalyses the reaction ATP + H2O = ADP + phosphate + H(+). Its function is as follows. ATP-dependent RNA helicase that unwinds RNA in a 3' to 5' direction and that plays an important role in mitochondrial mRNA editing, a process involving the addition and deletion of uridine (U) nucleotides in the pre-mRNA. As part of the RET2-containing gRNA-binding (RET2-GRBC) complex, acts as a scaffold for the assembly of mRNA-gRNA hybrids and the recruitment of the RNA editing core (RECC) complex. Regulates several steps of mRNA editing by the MRBC3010/GRBC6 containing gRNA-binding (MRBC3010-GRBC) complex including loading of unedited mRNA, editing in the first sequence block and subsequent editing progression across multiple sequence blocks. Also, regulates the RNA substrate content of the MRBC3010-GRBC complex as well as the association of this complex with mitoribosomes. This is RNA editing associated helicase 2 from Trypanosoma brucei brucei (strain 927/4 GUTat10.1).